The primary structure comprises 199 residues: MNYYSTSIAKLIEELSKLPGIGPKTAQRLAFFIINMPLEEVKSLSQAIIDAKEKIKYCRICYNITDTEVCNICSDKERDHSLICVVSHPMDVVAMEKIREYKGVYHVLHGVISPIEGVGPEDIKIKELLDRVKNGNVKEVILATNPDIEGEATAMYIAKLLKPLGIKVTRIAHGVPVGGDLEYTDVVTLSRALEGRREL.

The C4-type zinc finger occupies Cys-58–Cys-73. The Toprim domain maps to Ser-81–Pro-176.

It belongs to the RecR family.

Its function is as follows. May play a role in DNA repair. It seems to be involved in an RecBC-independent recombinational process of DNA repair. It may act with RecF and RecO. This Thermoanaerobacter pseudethanolicus (strain ATCC 33223 / 39E) (Clostridium thermohydrosulfuricum) protein is Recombination protein RecR.